The following is a 220-amino-acid chain: Adenylate kinase (220 aa).

Residue 10 to 15 (GAGKGT) participates in ATP binding. An NMP region spans residues 30–59 (STGDMLRAAVKAGSPLGVEAKGYMDAGKLV). AMP contacts are provided by residues Thr-31, Arg-36, 57–59 (KLV), 85–88 (GFPR), and Gln-92. Positions 122 to 159 (GRRTHAASGRTYHVKFNPPKVEGQDDVTGEPLIQRDDD) are LID. ATP is bound by residues Arg-123 and 132-133 (TY). The AMP site is built by Arg-156 and Arg-167. Gly-206 provides a ligand contact to ATP.

It belongs to the adenylate kinase family. In terms of assembly, monomer.

The protein localises to the cytoplasm. The catalysed reaction is AMP + ATP = 2 ADP. Its pathway is purine metabolism; AMP biosynthesis via salvage pathway; AMP from ADP: step 1/1. Its function is as follows. Catalyzes the reversible transfer of the terminal phosphate group between ATP and AMP. Plays an important role in cellular energy homeostasis and in adenine nucleotide metabolism. The sequence is that of Adenylate kinase from Burkholderia vietnamiensis (strain G4 / LMG 22486) (Burkholderia cepacia (strain R1808)).